Consider the following 526-residue polypeptide: Probable inorganic phosphate transporter 1-3 (526 aa).

The Cytoplasmic portion of the chain corresponds to methionine 1–histidine 21. The chain crosses the membrane as a helical span at residues phenylalanine 22 to isoleucine 42. The Extracellular portion of the chain corresponds to serine 43 to serine 70. The chain crosses the membrane as a helical span at residues alanine 71–leucine 91. Over glycine 92–serine 99 the chain is Cytoplasmic. A helical transmembrane segment spans residues valine 100 to glycine 120. At arginine 121 to lysine 124 the chain is on the extracellular side. A helical membrane pass occupies residues glycine 125–tyrosine 145. The Cytoplasmic portion of the chain corresponds to proline 146 to alanine 163. The chain crosses the membrane as a helical span at residues phenylalanine 164–leucine 184. The Extracellular segment spans residues valine 185–alanine 211. The helical transmembrane segment at aspartate 212 to tryptophan 232 threads the bilayer. Over arginine 233–arginine 294 the chain is Cytoplasmic. Residues histidine 295–serine 315 form a helical membrane-spanning segment. Residues glutamine 316 to glutamine 349 lie on the Extracellular side of the membrane. Residues alanine 350–valine 370 form a helical membrane-spanning segment. At alanine 371 to arginine 373 the chain is on the cytoplasmic side. The helical transmembrane segment at phenylalanine 374 to proline 394 threads the bilayer. The Extracellular portion of the chain corresponds to tyrosine 395–phenylalanine 407. Residues valine 408–isoleucine 428 form a helical membrane-spanning segment. Over valine 429 to glycine 444 the chain is Cytoplasmic. Residues isoleucine 445–alanine 465 form a helical membrane-spanning segment. Residues glutamine 466 to asparagine 483 lie on the Extracellular side of the membrane. A helical transmembrane segment spans residues alanine 484–glutamate 504. Residues serine 505–alanine 526 lie on the Cytoplasmic side of the membrane.

Belongs to the major facilitator superfamily. Phosphate:H(+) symporter (TC 2.A.1.9) family. Expressed at low levels in roots.

The protein localises to the membrane. In terms of biological role, high-affinity transporter for external inorganic phosphate. This Oryza sativa subsp. japonica (Rice) protein is Probable inorganic phosphate transporter 1-3 (PHT1-3).